The primary structure comprises 320 residues: ADP/ATP translocase 4 (320 aa).

The Mitochondrial intermembrane segment spans residues 1 to 20 (MSNESSKKQSSKKALFDPVS). The stretch at 19–111 (VSFSKDLLAG…FAFKDKYKEL (93 aa)) is one Solcar 1 repeat. Residues 21–50 (FSKDLLAGGVAAAVSKTAVAPIERVKLLLQ) traverse the membrane as a helical segment. Topologically, residues 51-87 (VQASSKQISPEARYKGMLDCLVRIPREQGFLSYWRGN) are mitochondrial matrix. Residues 88–112 (LANVIRYFPTQALNFAFKDKYKELF) form a helical membrane-spanning segment. Residues arginine 93 and lysine 105 each coordinate ADP. The Mitochondrial intermembrane segment spans residues 113–122 (MSGVNKEKQF). A helical membrane pass occupies residues 123-143 (WRWFLANLASGGAAGATSLCV). 2 Solcar repeats span residues 124 to 214 (RWFL…VKGL) and 221 to 308 (TPFL…IKEF). The Mitochondrial matrix segment spans residues 144–191 (VYPLDFARTRLGVDIGKGPEQRQFTGLGDCIMKIAKSDGLIGLYQGFG). A helical membrane pass occupies residues 192–212 (VSVQGIIVYRASYFGAYDTVK). The Mitochondrial intermembrane segment spans residues 213–223 (GLLPKPKETPF). Residues 224–244 (LVSFIIAQIVTTCSGILSYPF) form a helical membrane-spanning segment. At 245-284 (DTVRRRMMMQSGESDRQYKGTIDCFLKIYRHEGVPAFFRG) the chain is on the mitochondrial matrix side. ADP is bound at residue arginine 248. The segment at 248–253 (RRRMMM) is important for transport activity. Positions 248–253 (RRRMMM) match the Nucleotide carrier signature motif motif. The chain crosses the membrane as a helical span at residues 285–302 (AFSNILRGTGGALVLVLY). Residues 303–320 (DKIKEFLNIDVGGSSSGD) lie on the Mitochondrial intermembrane side of the membrane.

Belongs to the mitochondrial carrier (TC 2.A.29) family. Monomer. In terms of tissue distribution, specifically expressed in undifferentiated embryonic stem cells and germ cells. Expression is down-regulated after embryonic stem cells differentiation. In adults, only expressed in developing gametes in testis. In testis, expressed at higher level in spermatocytes. Expression is probably associated with entry of the male germ cells into meiosis. Expressed at very low level in Sertoli cells.

The protein localises to the mitochondrion inner membrane. Its subcellular location is the membrane. It localises to the cell projection. The protein resides in the cilium. It is found in the flagellum membrane. It catalyses the reaction ADP(in) + ATP(out) = ADP(out) + ATP(in). The enzyme catalyses dATP(out) + ADP(in) = dATP(in) + ADP(out). The catalysed reaction is dADP(in) + ADP(out) = dADP(out) + ADP(in). It carries out the reaction H(+)(in) = H(+)(out). Its activity is regulated as follows. The matrix-open state (m-state) is inhibited by the membrane-permeable bongkrekic acid (BKA). The cytoplasmic-open state (c-state) is inhibited by the membrane-impermeable toxic inhibitor carboxyatractyloside (CATR). Proton transporter activity is inhibited by ADP:ATP antiporter activity. Functionally, ADP:ATP antiporter that mediates import of ADP into the mitochondrial matrix for ATP synthesis, and export of ATP out to fuel the cell. Cycles between the cytoplasmic-open state (c-state) and the matrix-open state (m-state): operates by the alternating access mechanism with a single substrate-binding site intermittently exposed to either the cytosolic (c-state) or matrix (m-state) side of the inner mitochondrial membrane. Specifically required during spermatogenesis, probably to mediate ADP:ATP exchange in spermatocytes. Large ATP supplies from mitochondria may be critical for normal progression of spermatogenesis during early stages of meiotic prophase I, including DNA double-strand break repair and chromosomal synapsis. In addition to its ADP:ATP antiporter activity, also involved in mitochondrial uncoupling and mitochondrial permeability transition pore (mPTP) activity. Plays a role in mitochondrial uncoupling by acting as a proton transporter: proton transport uncouples the proton flows via the electron transport chain and ATP synthase to reduce the efficiency of ATP production and cause mitochondrial thermogenesis. Proton transporter activity is inhibited by ADP:ATP antiporter activity, suggesting that SLC25A31/ANT4 acts as a master regulator of mitochondrial energy output by maintaining a delicate balance between ATP production (ADP:ATP antiporter activity) and thermogenesis (proton transporter activity). Proton transporter activity requires free fatty acids as cofactor, but does not transport it. Among nucleotides, may also exchange ADP for dATP and dADP. Also plays a key role in mPTP opening, a non-specific pore that enables free passage of the mitochondrial membranes to solutes of up to 1.5 kDa, and which contributes to cell death. It is however unclear if SLC25A31/ANT4 constitutes a pore-forming component of mPTP or regulates it. The chain is ADP/ATP translocase 4 from Mus musculus (Mouse).